The following is a 141-amino-acid chain: Elongation factor G, chloroplastic (141 aa).

The tr-type G domain occupies K12–M141. Residues A21–T28 and D85–H89 each bind GTP.

The protein belongs to the TRAFAC class translation factor GTPase superfamily. Classic translation factor GTPase family. EF-G/EF-2 subfamily.

It is found in the plastid. Its subcellular location is the chloroplast. It functions in the pathway protein biosynthesis; polypeptide chain elongation. Chloroplast-localized elongation factor EF-G involved in protein synthesis in plastids. Catalyzes the GTP-dependent ribosomal translocation step during translation elongation. During this step, the ribosome changes from the pre-translocational (PRE) to the post-translocational (POST) state as the newly formed A-site-bound peptidyl-tRNA and P-site-bound deacylated tRNA move to the P and E sites, respectively. Catalyzes the coordinated movement of the two tRNA molecules, the mRNA and conformational changes in the ribosome. The chain is Elongation factor G, chloroplastic (fusA) from Pisum sativum (Garden pea).